Reading from the N-terminus, the 535-residue chain is Peptide chain release factor 3 (535 aa).

Residues 8 to 276 form the tr-type G domain; that stretch reads ARRRTFAIIS…ALVDLAPQPG (269 aa). Residues 17 to 24, 85 to 89, and 139 to 142 contribute to the GTP site; these read SHPDAGKT, DTPGH, and NKMD.

It belongs to the TRAFAC class translation factor GTPase superfamily. Classic translation factor GTPase family. PrfC subfamily.

The protein localises to the cytoplasm. In terms of biological role, increases the formation of ribosomal termination complexes and stimulates activities of RF-1 and RF-2. It binds guanine nucleotides and has strong preference for UGA stop codons. It may interact directly with the ribosome. The stimulation of RF-1 and RF-2 is significantly reduced by GTP and GDP, but not by GMP. The sequence is that of Peptide chain release factor 3 from Bordetella avium (strain 197N).